A 448-amino-acid chain; its full sequence is Exodeoxyribonuclease 7 large subunit (448 aa).

This sequence belongs to the XseA family. Heterooligomer composed of large and small subunits.

It is found in the cytoplasm. It carries out the reaction Exonucleolytic cleavage in either 5'- to 3'- or 3'- to 5'-direction to yield nucleoside 5'-phosphates.. Functionally, bidirectionally degrades single-stranded DNA into large acid-insoluble oligonucleotides, which are then degraded further into small acid-soluble oligonucleotides. In Shewanella sp. (strain MR-4), this protein is Exodeoxyribonuclease 7 large subunit.